The chain runs to 765 residues: Alpha,alpha-trehalose phosphorylase (765 aa).

Residue 352-353 (WD) participates in substrate binding. E479 serves as the catalytic Proton donor. Position 591–592 (591–592 (KQ)) interacts with substrate.

It belongs to the glycosyl hydrolase 65 family. As to quaternary structure, homodimer.

It carries out the reaction alpha,alpha-trehalose + phosphate = beta-D-glucose 1-phosphate + D-glucose. The protein operates within glycan degradation; trehalose degradation. In terms of biological role, catalyzes the reversible phosphorolytic cleavage of trehalose. Phosphorolysis is specific for trehalose. The chain is Alpha,alpha-trehalose phosphorylase (treP) from Geobacillus stearothermophilus (Bacillus stearothermophilus).